A 73-amino-acid polypeptide reads, in one-letter code: UPF0270 protein PMI2817 (73 aa).

It belongs to the UPF0270 family.

This chain is UPF0270 protein PMI2817, found in Proteus mirabilis (strain HI4320).